The following is a 112-amino-acid chain: Head virion protein G6P (112 aa).

3 helical membrane passes run 3-23 (VLLG…TLFG), 36-56 (IAIA…ILVG), and 80-100 (NALP…IFDV).

This sequence belongs to the inovirus G6P protein family. In terms of assembly, interacts with G3P; this interaction is required for proper integration of G3P and G6P into the virion.

The protein resides in the virion. It localises to the host membrane. Functionally, plays essential roles both in the entry of the viral genome into the bacterial host and in budding process. The formation of the G3P-G6P complex termed adsorption complex is essential for correct termination of filamentous phage assembly. This chain is Head virion protein G6P (VI), found in Escherichia coli (Bacteriophage f1).